Reading from the N-terminus, the 127-residue chain is Adult-specific rigid cuticular protein 12.6 (127 aa).

The Chitin-binding type R&amp;R domain occupies 9 to 87 (GPAYNFGYNT…ALAALAPKAP (79 aa)).

Functionally, component of the rigid cuticle of the spider. This Araneus diadematus (European garden spider) protein is Adult-specific rigid cuticular protein 12.6.